Reading from the N-terminus, the 280-residue chain is Ribosomal RNA small subunit methyltransferase A (280 aa).

S-adenosyl-L-methionine-binding residues include His15, Leu17, Gly42, Glu64, Asp89, and Asn109.

This sequence belongs to the class I-like SAM-binding methyltransferase superfamily. rRNA adenine N(6)-methyltransferase family. RsmA subfamily.

The protein localises to the cytoplasm. It catalyses the reaction adenosine(1518)/adenosine(1519) in 16S rRNA + 4 S-adenosyl-L-methionine = N(6)-dimethyladenosine(1518)/N(6)-dimethyladenosine(1519) in 16S rRNA + 4 S-adenosyl-L-homocysteine + 4 H(+). Its function is as follows. Specifically dimethylates two adjacent adenosines (A1518 and A1519) in the loop of a conserved hairpin near the 3'-end of 16S rRNA in the 30S particle. May play a critical role in biogenesis of 30S subunits. In Prochlorococcus marinus (strain MIT 9303), this protein is Ribosomal RNA small subunit methyltransferase A.